The following is a 265-amino-acid chain: Glutamate racemase (265 aa).

Substrate is bound by residues 12-13 and 44-45; these read DS and YG. Cys75 functions as the Proton donor/acceptor in the catalytic mechanism. 76–77 lines the substrate pocket; it reads NT. Cys186 functions as the Proton donor/acceptor in the catalytic mechanism. 187 to 188 is a substrate binding site; that stretch reads TH.

It belongs to the aspartate/glutamate racemases family.

The catalysed reaction is L-glutamate = D-glutamate. It functions in the pathway cell wall biogenesis; peptidoglycan biosynthesis. Functionally, provides the (R)-glutamate required for cell wall biosynthesis. The protein is Glutamate racemase of Pseudomonas aeruginosa (strain UCBPP-PA14).